A 576-amino-acid polypeptide reads, in one-letter code: Probable metalloreductase AIM14 (576 aa).

7 consecutive transmembrane segments (helical) span residues 21–41 (IKYGYYVLIISLVYLIGLALL), 70–90 (AIHLGILFFAVLVPFYYHYSL), 101–118 (LGRLSYALIPLNLFLTLR), 142–162 (IITVIGLLHGIFFIIKWAIDD), 177–197 (FVGFIISILVLFLLICSIGPM), 204–224 (LFYIVHNLVNVAFILLTPIHS), and 230–250 (FPFLLLNCTLLFIHIINRIVF). One can recognise a Ferric oxidoreductase domain in the interval 101 to 219 (LGRLSYALIP…NLVNVAFILL (119 aa)). Positions 250-388 (FAKSLMILNK…GGSGISFALP (139 aa)) constitute an FAD-binding FR-type domain. Positions 480–505 (ISNFNSENADSNDNTPETSHSPTKEN) are enriched in polar residues. The segment at 480 to 507 (ISNFNSENADSNDNTPETSHSPTKENGS) is disordered.

Belongs to the ferric reductase (FRE) family. AIM14 subfamily. Interacts with ribosomes.

It localises to the membrane. Probable cell surface metalloreductase. May be involved in iron or copper homeostasis. The polypeptide is Probable metalloreductase AIM14 (AIM14) (Saccharomyces cerevisiae (strain Lalvin EC1118 / Prise de mousse) (Baker's yeast)).